The sequence spans 206 residues: dITP/XTP pyrophosphatase (206 aa).

7–12 (SRNPKK) contacts substrate. D72 functions as the Proton acceptor in the catalytic mechanism. Mg(2+) is bound at residue D72. Residues S73, 155–158 (FGYD), K178, and 183–184 (HR) contribute to the substrate site.

It belongs to the HAM1 NTPase family. In terms of assembly, homodimer. Mg(2+) is required as a cofactor.

The catalysed reaction is XTP + H2O = XMP + diphosphate + H(+). It catalyses the reaction dITP + H2O = dIMP + diphosphate + H(+). It carries out the reaction ITP + H2O = IMP + diphosphate + H(+). Pyrophosphatase that catalyzes the hydrolysis of nucleoside triphosphates to their monophosphate derivatives, with a high preference for the non-canonical purine nucleotides XTP (xanthosine triphosphate), dITP (deoxyinosine triphosphate) and ITP. Seems to function as a house-cleaning enzyme that removes non-canonical purine nucleotides from the nucleotide pool, thus preventing their incorporation into DNA/RNA and avoiding chromosomal lesions. The protein is dITP/XTP pyrophosphatase of Mycobacteroides abscessus (strain ATCC 19977 / DSM 44196 / CCUG 20993 / CIP 104536 / JCM 13569 / NCTC 13031 / TMC 1543 / L948) (Mycobacterium abscessus).